The sequence spans 320 residues: Chorion protein S36 (320 aa).

Positions 1–18 (MNCFLFTLFFVAAPLATA) are cleaved as a signal peptide. Repeat copies occupy residues 178–181 (AAPV), 258–261 (AAPA), 266–269 (AAPA), 274–277 (AAPA), and alanine 290. Residues 259 to 320 (APAQSYNAAP…YGSAPPASGY (62 aa)) are disordered.

This sequence belongs to the chorion protein S36 family.

The protein localises to the secreted. Chorion membrane (egg shell) protein; plays a role in protecting the egg from the environment. This is Chorion protein S36 (Cp36) from Ceratitis capitata (Mediterranean fruit fly).